The following is a 206-amino-acid chain: Large ribosomal subunit protein uL4 (206 aa).

The segment at 48–97 (THAVKNRSLVSGGGKKPWKQKHTGRARQGSTRASQWVGGGKAMGPKPRDY) is disordered. The segment covering 63 to 72 (KPWKQKHTGR) has biased composition (basic residues).

The protein belongs to the universal ribosomal protein uL4 family. Part of the 50S ribosomal subunit.

One of the primary rRNA binding proteins, this protein initially binds near the 5'-end of the 23S rRNA. It is important during the early stages of 50S assembly. It makes multiple contacts with different domains of the 23S rRNA in the assembled 50S subunit and ribosome. Functionally, forms part of the polypeptide exit tunnel. This chain is Large ribosomal subunit protein uL4, found in Anaeromyxobacter dehalogenans (strain 2CP-1 / ATCC BAA-258).